We begin with the raw amino-acid sequence, 647 residues long: MSNRKQARLEAKQFIDTLSVQPYPNSTKVYVEGSRSDIRVPMREISLADSLVGGTKEAPIFQPNEAVRVYDTSGVYTDPTHQIDLYNGLPKLREEWIAERADTEVLDDVSSVYTKERLEDETLDELRYGNLPRIRRAKAGYCVTQLHYARKGIITPEMEYIALRENMGRAKYQDEVLTQQHAGQSFGANLPKEITPEFVRREVAEGRAIIPSNINHPESEPMIIGRNFLVKVNANIGNSSVTSSIEEEVEKLVWSTRWGGDTVMDLSTGRNIHETREWILRNSPVPIGTVPMYQALEKVNGVAENLTWEVMRDTLIEQAEQGVDYFTIHAGLLLRYIPMTAKRVTGIVSRGGSIIAKWCLAHHQESFLYTHFREICEICAKYDVALSLGDGLRPGSIADANDEAQFAELRTLGELTKIAWEYDVQVIIEGPGHVPMHMIKENMDEQLKHCHEAPFYTLGPLTTDIAPGYDHITSGIGAAMIGWYGCAMLCYVTPKEHLGLPNKEDVKTGLITYKLAAHAADLAKGHPGAQVRDNALSKARFEFRWQDQFNLSLDPDTARAFHDETLPQESGKVAHFCSMCGPKFCSMKISQEVREYAKGQQGEAGQAIEVKLLDDPLEGMKQKSAEFKASGSELYHPAVSHEEVAEG.

Substrate-binding positions include N235, M264, Y293, H329, 349 to 351, 390 to 393, and E429; these read SRG and DGLR. A Zn(2+)-binding site is contributed by H433. Y456 contributes to the substrate binding site. H497 is a Zn(2+) binding site. Positions 577, 580, and 585 each coordinate [4Fe-4S] cluster. Residues 623–647 are disordered; the sequence is KSAEFKASGSELYHPAVSHEEVAEG.

The protein belongs to the ThiC family. Homodimer. [4Fe-4S] cluster is required as a cofactor.

It carries out the reaction 5-amino-1-(5-phospho-beta-D-ribosyl)imidazole + S-adenosyl-L-methionine = 4-amino-2-methyl-5-(phosphooxymethyl)pyrimidine + CO + 5'-deoxyadenosine + formate + L-methionine + 3 H(+). It functions in the pathway cofactor biosynthesis; thiamine diphosphate biosynthesis. Catalyzes the synthesis of the hydroxymethylpyrimidine phosphate (HMP-P) moiety of thiamine from aminoimidazole ribotide (AIR) in a radical S-adenosyl-L-methionine (SAM)-dependent reaction. This chain is Phosphomethylpyrimidine synthase, found in Vibrio vulnificus (strain CMCP6).